Consider the following 228-residue polypeptide: Isonitrile hydratase (228 aa).

Cys101 is a catalytic residue.

In terms of assembly, homodimer.

It carries out the reaction N-cyclohexylformamide = cyclohexyl isocyanide + H2O. Sensitive to thiol reagents and oxidizing reagents, but is not influenced by chelators or reducing reagents. Functionally, catalyzes the hydration of cyclohexyl isocyanide to N-cyclohexylformamide. Acts on various isonitriles, but not on nitriles or amides. Probably involved in detoxification. The sequence is that of Isonitrile hydratase (inhA) from Pseudomonas putida (Arthrobacter siderocapsulatus).